The chain runs to 170 residues: Small ribosomal subunit protein uS3mB (170 aa).

Residues 1–30 (MAAPVMSAFGRLQGLIRTERSLLTHVQSRC) constitute a mitochondrion transit peptide.

The protein belongs to the universal ribosomal protein uS3 family. Component of the mitochondrial ribosome small subunit (28S) which comprises a 12S rRNA and about 30 distinct proteins.

The protein resides in the mitochondrion. This is Small ribosomal subunit protein uS3mB (mrps24-b) from Xenopus laevis (African clawed frog).